Reading from the N-terminus, the 197-residue chain is Viral polyamine acetyltransferase (197 aa).

Asn-22 provides a ligand contact to acetyl-CoA. Glu-27 is an active-site residue. Residues 102–182 (SYTPDDKCLY…YQYGITKPFD (81 aa)) form the N-acetyltransferase domain. Acetyl-CoA contacts are provided by Ile-115, Ser-117, Gly-121, Gly-123, Ala-125, Thr-126, Thr-149, Asn-150, and Lys-159.

This sequence belongs to the acetyltransferase family.

The enzyme catalyses spermine + acetyl-CoA = N(1)-acetylspermine + CoA + H(+). It catalyses the reaction spermidine + acetyl-CoA = N(1)-acetylspermidine + CoA + H(+). It carries out the reaction spermidine + acetyl-CoA = N(8)-acetylspermidine + CoA + H(+). The catalysed reaction is putrescine + acetyl-CoA = N-acetylputrescine + CoA + H(+). The enzyme catalyses cadaverine + acetyl-CoA = N-acetylcadaverine + CoA + H(+). It catalyses the reaction sym-homospermidine + acetyl-CoA = N(1)-acetyl-sym-homospermidine + CoA + H(+). Functionally, acetylates polyamines such as spermine, spermidine, cadaverine, homospermidine and putrescine (the latter with low efficiency). May play a role in the regulation of polyamine catabolism in the host during viral replication. This chain is Viral polyamine acetyltransferase, found in Chlorella (PBCV-1).